Reading from the N-terminus, the 119-residue chain is Type II secretion system protein I (119 aa).

The propeptide at 1–5 (MNARG) is leader sequence. M6 carries the N-methylmethionine modification. A helical transmembrane segment spans residues 6–26 (MTLLEVMVALAVFAIAGLAVM).

Belongs to the GSP I family. Type II secretion is composed of four main components: the outer membrane complex, the inner membrane complex, the cytoplasmic secretion ATPase and the periplasm-spanning pseudopilus. Interacts with core component ExeG. Post-translationally, cleaved by prepilin peptidase. Methylated by prepilin peptidase at the amino group of the N-terminal methionine once the leader sequence is cleaved by prepilin peptidase.

The protein localises to the cell inner membrane. In terms of biological role, component of the type II secretion system required for the energy-dependent secretion of extracellular factors such as proteases and toxins from the periplasm. Part of the pseudopilus tip complex that is critical for the recognition and binding of secretion substrates. In Aeromonas hydrophila, this protein is Type II secretion system protein I (exeI).